Here is a 385-residue protein sequence, read N- to C-terminus: Acetylornithine aminotransferase (385 aa).

Pyridoxal 5'-phosphate is bound by residues 94-95 (GT) and Phe126. Position 129 (Arg129) interacts with N(2)-acetyl-L-ornithine. Residue 211–214 (DEVQ) coordinates pyridoxal 5'-phosphate. An N6-(pyridoxal phosphate)lysine modification is found at Lys240. Position 267 (Thr267) interacts with N(2)-acetyl-L-ornithine. Residue Thr268 participates in pyridoxal 5'-phosphate binding.

It belongs to the class-III pyridoxal-phosphate-dependent aminotransferase family. ArgD subfamily. As to quaternary structure, homodimer. Requires pyridoxal 5'-phosphate as cofactor.

It is found in the cytoplasm. The catalysed reaction is N(2)-acetyl-L-ornithine + 2-oxoglutarate = N-acetyl-L-glutamate 5-semialdehyde + L-glutamate. It functions in the pathway amino-acid biosynthesis; L-arginine biosynthesis; N(2)-acetyl-L-ornithine from L-glutamate: step 4/4. The chain is Acetylornithine aminotransferase from Thermotoga maritima (strain ATCC 43589 / DSM 3109 / JCM 10099 / NBRC 100826 / MSB8).